Consider the following 260-residue polypeptide: Small ribosomal subunit protein uS2 (260 aa).

Belongs to the universal ribosomal protein uS2 family.

This is Small ribosomal subunit protein uS2 (rpsB) from Borreliella burgdorferi (strain ATCC 35210 / DSM 4680 / CIP 102532 / B31) (Borrelia burgdorferi).